The chain runs to 418 residues: Somatostatin receptor type 3 (418 aa).

Residues 1–21 are disordered; sequence MDMLHPSSVSTTSEPENASSA. Topologically, residues 1 to 43 are extracellular; sequence MDMLHPSSVSTTSEPENASSAWPPDATLGNVSAGPSPAGLAVS. Residues 7 to 20 show a composition bias toward polar residues; that stretch reads SSVSTTSEPENASS. N-linked (GlcNAc...) asparagine glycosylation is found at asparagine 17 and asparagine 30. The chain crosses the membrane as a helical span at residues 44–69; the sequence is GVLIPLVYLVVCVVGLLGNSLVIYVV. Residues 70–79 lie on the Cytoplasmic side of the membrane; that stretch reads LRHTASPSVT. The chain crosses the membrane as a helical span at residues 80–101; the sequence is NVYILNLALADELFMLGLPFLA. The Extracellular portion of the chain corresponds to 102-116; that stretch reads AQNALSYWPFGSLMC. A disulfide bridge links cysteine 116 with cysteine 191. The helical transmembrane segment at 117-138 threads the bilayer; sequence RLVMAVDGINQFTSIFCLTVMS. Over 139–161 the chain is Cytoplasmic; that stretch reads VDRYLAVVHPTRSARWRTAPVAR. Residues 162 to 181 form a helical membrane-spanning segment; it reads TVSAAVWVASAVVVLPVVVF. Residues 182–205 are Extracellular-facing; sequence SGVPRGMSTCHMQWPEPAAAWRAG. Residues 206 to 231 traverse the membrane as a helical segment; the sequence is FIIYTAALGFFGPLLVICLCYLLIVV. The Cytoplasmic segment spans residues 232–257; it reads KVRSAGRRVWAPSCQRRRRSERRVTR. Residues 258-279 form a helical membrane-spanning segment; sequence MVVAVVALFVLCWMPFYVLNIV. Residues 280–293 are Extracellular-facing; sequence NVVCPLPEEPAFFG. Residues 294–316 form a helical membrane-spanning segment; it reads LYFLVVALPYANSCANPILYGFL. The Cytoplasmic portion of the chain corresponds to 317–418; it reads SYRFKQGFRR…KSSTMRISYL (102 aa). Phosphoserine occurs at positions 332 and 337. Residues 335–418 are disordered; that stretch reads VRSQEPTVGP…KSSTMRISYL (84 aa). Residue threonine 348 is modified to Phosphothreonine. A compositionally biased stretch (acidic residues) spans 348 to 360; the sequence is TEEEDEEEEDGEE. Residues 361–371 show a composition bias toward basic and acidic residues; it reads SREGGKGKEMN. 2 stretches are compositionally biased toward polar residues: residues 373–385 and 395–418; these read RVSQ…TSGQ and KEQQ…ISYL.

The protein belongs to the G-protein coupled receptor 1 family. In terms of assembly, homodimer and heterodimer with SSTR2. Heterodimerization with SSTR2 inactivates SSTR3 receptor function. Post-translationally, phosphorylated. Phosphorylation increases upon somatostatin binding. Brain, pituitary and pancreas.

It is found in the cell membrane. Its function is as follows. Receptor for somatostatin-14 and -28. This receptor is coupled via pertussis toxin sensitive G proteins to inhibition of adenylyl cyclase. The protein is Somatostatin receptor type 3 (SSTR3) of Homo sapiens (Human).